The chain runs to 303 residues: Uracil phosphoribosyltransferase (303 aa).

Residues M1–S86 form a unknown region. Residues L87–S303 are UPRTase. Residues R170, R195, and D222 to S230 each bind 5-phospho-alpha-D-ribose 1-diphosphate. Residues I285 and G290–A292 contribute to the uracil site. D291 serves as a coordination point for 5-phospho-alpha-D-ribose 1-diphosphate.

The protein belongs to the UPRTase family. It depends on Mg(2+) as a cofactor.

It carries out the reaction UMP + diphosphate = 5-phospho-alpha-D-ribose 1-diphosphate + uracil. Its pathway is pyrimidine metabolism; UMP biosynthesis via salvage pathway; UMP from uracil: step 1/1. With respect to regulation, allosterically activated by GTP. Catalyzes the conversion of uracil and 5-phospho-alpha-D-ribose 1-diphosphate (PRPP) to UMP and diphosphate. This Chlamydia muridarum (strain MoPn / Nigg) protein is Uracil phosphoribosyltransferase (upp).